The chain runs to 714 residues: Fatty acid oxidation complex subunit alpha (714 aa).

Residues 1–190 form an enoyl-CoA hydratase region; the sequence is MDMTSAFTLN…KSGLVDEIVP (190 aa). The interval 306–714 is 3-hydroxyacyl-CoA dehydrogenase; sequence GTLDSIGILG…FWKTSATDRH (409 aa).

This sequence in the N-terminal section; belongs to the enoyl-CoA hydratase/isomerase family. The protein in the central section; belongs to the 3-hydroxyacyl-CoA dehydrogenase family. In terms of assembly, heterotetramer of two alpha chains (FadJ) and two beta chains (FadI).

The protein resides in the cytoplasm. It catalyses the reaction a (3S)-3-hydroxyacyl-CoA = a (2E)-enoyl-CoA + H2O. It carries out the reaction a 4-saturated-(3S)-3-hydroxyacyl-CoA = a (3E)-enoyl-CoA + H2O. The enzyme catalyses a (3S)-3-hydroxyacyl-CoA + NAD(+) = a 3-oxoacyl-CoA + NADH + H(+). The catalysed reaction is (3S)-3-hydroxybutanoyl-CoA = (3R)-3-hydroxybutanoyl-CoA. It participates in lipid metabolism; fatty acid beta-oxidation. In terms of biological role, catalyzes the formation of a hydroxyacyl-CoA by addition of water on enoyl-CoA. Also exhibits 3-hydroxyacyl-CoA epimerase and 3-hydroxyacyl-CoA dehydrogenase activities. This is Fatty acid oxidation complex subunit alpha from Escherichia fergusonii (strain ATCC 35469 / DSM 13698 / CCUG 18766 / IAM 14443 / JCM 21226 / LMG 7866 / NBRC 102419 / NCTC 12128 / CDC 0568-73).